Reading from the N-terminus, the 275-residue chain is 4-hydroxy-tetrahydrodipicolinate reductase (275 aa).

NAD(+) is bound by residues 13-18 (GAGGKM) and 108-110 (GTT). His-164 (proton donor/acceptor) is an active-site residue. (S)-2,3,4,5-tetrahydrodipicolinate is bound at residue His-165. Catalysis depends on Lys-168, which acts as the Proton donor. 174–175 (GT) serves as a coordination point for (S)-2,3,4,5-tetrahydrodipicolinate.

The protein belongs to the DapB family.

The protein localises to the cytoplasm. The enzyme catalyses (S)-2,3,4,5-tetrahydrodipicolinate + NAD(+) + H2O = (2S,4S)-4-hydroxy-2,3,4,5-tetrahydrodipicolinate + NADH + H(+). It carries out the reaction (S)-2,3,4,5-tetrahydrodipicolinate + NADP(+) + H2O = (2S,4S)-4-hydroxy-2,3,4,5-tetrahydrodipicolinate + NADPH + H(+). It participates in amino-acid biosynthesis; L-lysine biosynthesis via DAP pathway; (S)-tetrahydrodipicolinate from L-aspartate: step 4/4. Catalyzes the conversion of 4-hydroxy-tetrahydrodipicolinate (HTPA) to tetrahydrodipicolinate. This chain is 4-hydroxy-tetrahydrodipicolinate reductase, found in Picosynechococcus sp. (strain ATCC 27264 / PCC 7002 / PR-6) (Agmenellum quadruplicatum).